Here is a 130-residue protein sequence, read N- to C-terminus: ER membrane protein complex subunit 5 (130 aa).

Topologically, residues 1-3 (MAS) are cytoplasmic. A helical membrane pass occupies residues 4–22 (SFWKGVVGIGLFALAHAAF). At 23–43 (SAAQHRSYMRLTEKENETLPI) the chain is on the lumenal side. Residues 44-63 (DIVLQTLLSFVITCYGIVHI) form a helical membrane-spanning segment. The Cytoplasmic portion of the chain corresponds to 64-130 (SGEFKDMDAS…LRLRKLENFH (67 aa)).

Belongs to the membrane magnesium transporter (TC 1.A.67) family. Component of the ER membrane protein complex (EMC).

Its subcellular location is the endoplasmic reticulum membrane. It is found in the golgi apparatus membrane. The protein resides in the early endosome membrane. Part of the endoplasmic reticulum membrane protein complex (EMC) that enables the energy-independent insertion into endoplasmic reticulum membranes of newly synthesized membrane proteins. Preferentially accommodates proteins with transmembrane domains that are weakly hydrophobic or contain destabilizing features such as charged and aromatic residues. Involved in the cotranslational insertion of multi-pass membrane proteins in which stop-transfer membrane-anchor sequences become ER membrane spanning helices. It is also required for the post-translational insertion of tail-anchored/TA proteins in endoplasmic reticulum membranes. By mediating the proper cotranslational insertion of N-terminal transmembrane domains in an N-exo topology, with translocated N-terminus in the lumen of the ER, controls the topology of multi-pass membrane proteins like the G protein-coupled receptors. By regulating the insertion of various proteins in membranes, it is indirectly involved in many cellular processes. May be involved in Mg(2+) transport. This chain is ER membrane protein complex subunit 5, found in Danio rerio (Zebrafish).